The primary structure comprises 90 residues: Progonadoliberin-3 (90 aa).

The N-terminal stretch at 1–23 is a signal peptide; it reads MEASSRVTVQVLLLALVVQVTLS. Pyrrolidone carboxylic acid is present on Gln24. Gly33 carries the post-translational modification Glycine amide.

It belongs to the GnRH family.

It is found in the secreted. In terms of biological role, stimulates the secretion of gonadotropins. This chain is Progonadoliberin-3 (gnrh3), found in Sparus aurata (Gilthead sea bream).